Reading from the N-terminus, the 124-residue chain is Small ribosomal subunit protein uS12 (124 aa).

At D89 the chain carries 3-methylthioaspartic acid. The segment at 104 to 124 (LQGVKDRKQSRSKYGAKRPKK) is disordered. A compositionally biased stretch (basic residues) spans 113–124 (SRSKYGAKRPKK).

This sequence belongs to the universal ribosomal protein uS12 family. As to quaternary structure, part of the 30S ribosomal subunit. Contacts proteins S8 and S17. May interact with IF1 in the 30S initiation complex.

In terms of biological role, with S4 and S5 plays an important role in translational accuracy. Functionally, interacts with and stabilizes bases of the 16S rRNA that are involved in tRNA selection in the A site and with the mRNA backbone. Located at the interface of the 30S and 50S subunits, it traverses the body of the 30S subunit contacting proteins on the other side and probably holding the rRNA structure together. The combined cluster of proteins S8, S12 and S17 appears to hold together the shoulder and platform of the 30S subunit. The chain is Small ribosomal subunit protein uS12 from Thiomonas delicata (Thiomonas cuprina).